The primary structure comprises 116 residues: NADH-ubiquinone oxidoreductase chain 3 (116 aa).

3 helical membrane-spanning segments follow: residues 8–28, 56–76, and 87–107; these read VAAT…LPSL, FFLV…LLPL, and ISLL…IYEW.

Belongs to the complex I subunit 3 family.

It localises to the mitochondrion membrane. It catalyses the reaction a ubiquinone + NADH + 5 H(+)(in) = a ubiquinol + NAD(+) + 4 H(+)(out). Core subunit of the mitochondrial membrane respiratory chain NADH dehydrogenase (Complex I) that is believed to belong to the minimal assembly required for catalysis. Complex I functions in the transfer of electrons from NADH to the respiratory chain. The immediate electron acceptor for the enzyme is believed to be ubiquinone. In Squalus acanthias (Spiny dogfish), this protein is NADH-ubiquinone oxidoreductase chain 3 (MT-ND3).